The following is a 229-amino-acid chain: MNDHVIYTQSDVGLNQFFAKIYSLVGMGVGLSAFVSYLMLYPFRENLISILVNQPMIYYGAAIIELILVFVASGAARKNTPAALPIFLIYSALNGFTLSFIIVAYAQTTVFQAFLSSAAVFFAMSIIGVKTKRDMSGLRKAMFAALIGVVVASLINLFIGSGMMSYVISVISVLIFSGLIASDNQMIKRVYQATNGQVGDGWAVAMALSLYLDFINLFISLLRIFGRND.

7 consecutive transmembrane segments (helical) span residues 21-41 (IYSLVGMGVGLSAFVSYLMLY), 56-76 (MIYYGAAIIELILVFVASGAA), 83-103 (ALPIFLIYSALNGFTLSFIIV), 109-129 (TVFQAFLSSAAVFFAMSIIGV), 141-161 (AMFAALIGVVVASLINLFIGS), 162-182 (GMMSYVISVISVLIFSGLIAS), and 202-222 (WAVAMALSLYLDFINLFISLL).

This sequence belongs to the BI1 family.

The protein resides in the cell membrane. This is an uncharacterized protein from Streptococcus pyogenes serotype M6 (strain ATCC BAA-946 / MGAS10394).